A 128-amino-acid polypeptide reads, in one-letter code: Aspartate 1-decarboxylase (128 aa).

The active-site Schiff-base intermediate with substrate; via pyruvic acid is the Ser-25. Ser-25 bears the Pyruvic acid (Ser) mark. Substrate is bound at residue Thr-57. Tyr-58 functions as the Proton donor in the catalytic mechanism. 73–75 (GAA) lines the substrate pocket.

The protein belongs to the PanD family. As to quaternary structure, heterooctamer of four alpha and four beta subunits. Requires pyruvate as cofactor. Is synthesized initially as an inactive proenzyme, which is activated by self-cleavage at a specific serine bond to produce a beta-subunit with a hydroxyl group at its C-terminus and an alpha-subunit with a pyruvoyl group at its N-terminus.

The protein resides in the cytoplasm. The catalysed reaction is L-aspartate + H(+) = beta-alanine + CO2. The protein operates within cofactor biosynthesis; (R)-pantothenate biosynthesis; beta-alanine from L-aspartate: step 1/1. Functionally, catalyzes the pyruvoyl-dependent decarboxylation of aspartate to produce beta-alanine. This is Aspartate 1-decarboxylase from Chlorobium phaeovibrioides (strain DSM 265 / 1930) (Prosthecochloris vibrioformis (strain DSM 265)).